The following is a 389-amino-acid chain: Dual-specificity RNA methyltransferase RlmN (389 aa).

Residue glutamate 94 is the Proton acceptor of the active site. The Radical SAM core domain occupies 134–367 (PRVRVTQCIS…CFVRRRRGDD (234 aa)). An intrachain disulfide couples cysteine 141 to cysteine 372. [4Fe-4S] cluster-binding residues include cysteine 148, cysteine 152, and cysteine 155. S-adenosyl-L-methionine is bound by residues 197–198 (GE), serine 229, 253–255 (SLH), and asparagine 329. Cysteine 372 functions as the S-methylcysteine intermediate in the catalytic mechanism.

Belongs to the radical SAM superfamily. RlmN family. [4Fe-4S] cluster is required as a cofactor.

It localises to the cytoplasm. It catalyses the reaction adenosine(2503) in 23S rRNA + 2 reduced [2Fe-2S]-[ferredoxin] + 2 S-adenosyl-L-methionine = 2-methyladenosine(2503) in 23S rRNA + 5'-deoxyadenosine + L-methionine + 2 oxidized [2Fe-2S]-[ferredoxin] + S-adenosyl-L-homocysteine. The enzyme catalyses adenosine(37) in tRNA + 2 reduced [2Fe-2S]-[ferredoxin] + 2 S-adenosyl-L-methionine = 2-methyladenosine(37) in tRNA + 5'-deoxyadenosine + L-methionine + 2 oxidized [2Fe-2S]-[ferredoxin] + S-adenosyl-L-homocysteine. In terms of biological role, specifically methylates position 2 of adenine 2503 in 23S rRNA and position 2 of adenine 37 in tRNAs. m2A2503 modification seems to play a crucial role in the proofreading step occurring at the peptidyl transferase center and thus would serve to optimize ribosomal fidelity. This chain is Dual-specificity RNA methyltransferase RlmN, found in Sorangium cellulosum (strain So ce56) (Polyangium cellulosum (strain So ce56)).